Here is a 316-residue protein sequence, read N- to C-terminus: Ornithine carbamoyltransferase (316 aa).

Carbamoyl phosphate is bound by residues 57–60 (STRT), Gln84, Arg108, and 135–138 (HPCQ). L-ornithine is bound by residues Asn166, Asp230, and 234-235 (SM). Residues 269-270 (CL) and Arg297 each bind carbamoyl phosphate.

The protein belongs to the aspartate/ornithine carbamoyltransferase superfamily. OTCase family.

It is found in the cytoplasm. It catalyses the reaction carbamoyl phosphate + L-ornithine = L-citrulline + phosphate + H(+). It participates in amino-acid degradation; L-arginine degradation via ADI pathway; carbamoyl phosphate from L-arginine: step 2/2. Reversibly catalyzes the transfer of the carbamoyl group from carbamoyl phosphate (CP) to the N(epsilon) atom of ornithine (ORN) to produce L-citrulline. The protein is Ornithine carbamoyltransferase of Bacillus cereus (strain 03BB102).